The following is a 316-amino-acid chain: MTKEFHHVTVLLHETIDMLDVKPDGIYVDATLGGAGHSEYLLSKLSEKGHLYAFDQDQNAIDNAQKRLAPYIEKGMVTFIKDNFRHLQACLREAGVQEIDGICYDLGVSSPQLDQRERGFSYKKDAPLDMRMNQDASLTAYEVVNNYDYHDLVRIFFKYGEDKFSKQIARKIEQAREVKPIETTTELAEIIKLVKPAKELKKKGHPAKQIFQAIRIEVNDELGAADESIQQAMDMLALDGRISVITFHSLEDRLTKQLFKEASTVEVPKGLPFIPDDLKPKMELVSRKPILPSAEELEANNRSHSAKLRVVRKIHK.

S-adenosyl-L-methionine contacts are provided by residues 35–37, Asp55, Phe84, Asp105, and Gln112; that span reads AGH.

It belongs to the methyltransferase superfamily. RsmH family.

The protein resides in the cytoplasm. The catalysed reaction is cytidine(1402) in 16S rRNA + S-adenosyl-L-methionine = N(4)-methylcytidine(1402) in 16S rRNA + S-adenosyl-L-homocysteine + H(+). Its function is as follows. Specifically methylates the N4 position of cytidine in position 1402 (C1402) of 16S rRNA. This chain is Ribosomal RNA small subunit methyltransferase H, found in Streptococcus pneumoniae serotype 4 (strain ATCC BAA-334 / TIGR4).